The chain runs to 352 residues: NAD(P)H oxidoreductase RTN4IP1, mitochondrial (352 aa).

The Enoyl reductase (ER) domain maps to 11-348 (ESLDLLEYKT…NSNSNGKIII (338 aa)). Residues V165, Y206, A296, and F298 each contribute to the NADPH site.

This sequence belongs to the zinc-containing alcohol dehydrogenase family. Quinone oxidoreductase subfamily.

Its subcellular location is the mitochondrion matrix. It catalyses the reaction a quinone + NADH + H(+) = a quinol + NAD(+). The catalysed reaction is a quinone + NADPH + H(+) = a quinol + NADP(+). It participates in cofactor biosynthesis; ubiquinone biosynthesis. Functionally, NAD(P)H oxidoreductase involved in the ubiquinone biosynthetic pathway. Required for the O-methyltransferase activity of coq3. The sequence is that of NAD(P)H oxidoreductase RTN4IP1, mitochondrial (rtn4ip1) from Dictyostelium discoideum (Social amoeba).